A 492-amino-acid polypeptide reads, in one-letter code: Glutamyl-tRNA(Gln) amidotransferase subunit A (492 aa).

Residues Lys79 and Ser154 each act as charge relay system in the active site. Catalysis depends on Ser178, which acts as the Acyl-ester intermediate.

The protein belongs to the amidase family. GatA subfamily. As to quaternary structure, heterotrimer of A, B and C subunits.

It carries out the reaction L-glutamyl-tRNA(Gln) + L-glutamine + ATP + H2O = L-glutaminyl-tRNA(Gln) + L-glutamate + ADP + phosphate + H(+). In terms of biological role, allows the formation of correctly charged Gln-tRNA(Gln) through the transamidation of misacylated Glu-tRNA(Gln) in organisms which lack glutaminyl-tRNA synthetase. The reaction takes place in the presence of glutamine and ATP through an activated gamma-phospho-Glu-tRNA(Gln). In Acinetobacter baumannii (strain AB0057), this protein is Glutamyl-tRNA(Gln) amidotransferase subunit A.